A 699-amino-acid chain; its full sequence is uncharacterized protein (699 aa).

3 disordered regions span residues 175 to 208 (PTLGVSEFPSKHGDHSDSKTYESPISNSQAASLS), 289 to 364 (PTAK…EEPD), and 539 to 603 (RAKE…KEYL). The segment covering 183–194 (PSKHGDHSDSKT) has biased composition (basic and acidic residues). A compositionally biased stretch (polar residues) spans 195–208 (YESPISNSQAASLS). Over residues 308 to 322 (SKHKKRPKRLSKFKQ) the composition is skewed to basic residues. Basic and acidic residues predominate over residues 323 to 338 (AKLETKKSGNKDHATS). Composition is skewed to polar residues over residues 339–360 (SEKLSLGNESIHSINETRSSSI) and 548–573 (HSNATCTIKNDDLSNTLNNRAANTKL). Residues 574-603 (NPKEEDKSTVESELKAPPKEKSSETSKEYL) show a composition bias toward basic and acidic residues.

The protein resides in the cytoplasm. This is an uncharacterized protein from Schizosaccharomyces pombe (strain 972 / ATCC 24843) (Fission yeast).